The primary structure comprises 154 residues: Probable transport accessory protein MmpS4 (154 aa).

2 helical membrane passes run isoleucine 19–valine 39 and glutamine 97–alanine 117.

This sequence belongs to the MmpS family.

The protein resides in the cell membrane. This Mycobacterium leprae (strain TN) protein is Probable transport accessory protein MmpS4.